The chain runs to 264 residues: MNHRPKKRFGQNFLQDRQVVDGIFAAADLQPEDRVLEIGPGLGALTDRLLPEVARLHVIEIDRDLGAGLQARDEDKLVVHLGDALKLDWTALLTDPPYKLIANLPYNISSQIVFKILDHRHLFSRLVLMFQQEVGERLCAGPGSKNYGILSVLCQVWFDIRRVLRVPPGAFYPPPKVHSAVLCFDALAQPRIVVEDQQFFRRVVKAAFAQRRKTLRNSLTGAGLGFDGLEVSLLDAGIDPGRRAETLSLEEFGKLAQLIQPHFV.

Residues Asn12, Leu14, Gly39, Glu60, Asp83, and Asn103 each contribute to the S-adenosyl-L-methionine site.

It belongs to the class I-like SAM-binding methyltransferase superfamily. rRNA adenine N(6)-methyltransferase family. RsmA subfamily.

The protein localises to the cytoplasm. The catalysed reaction is adenosine(1518)/adenosine(1519) in 16S rRNA + 4 S-adenosyl-L-methionine = N(6)-dimethyladenosine(1518)/N(6)-dimethyladenosine(1519) in 16S rRNA + 4 S-adenosyl-L-homocysteine + 4 H(+). Functionally, specifically dimethylates two adjacent adenosines (A1518 and A1519) in the loop of a conserved hairpin near the 3'-end of 16S rRNA in the 30S particle. May play a critical role in biogenesis of 30S subunits. The sequence is that of Ribosomal RNA small subunit methyltransferase A from Syntrophotalea carbinolica (strain DSM 2380 / NBRC 103641 / GraBd1) (Pelobacter carbinolicus).